A 562-amino-acid polypeptide reads, in one-letter code: Endochitinase (562 aa).

Positions 1 to 20 are cleaved as a signal peptide; it reads MSLLYIILLFTQFLLLPTDA. Residues 27-311 enclose the GH18 domain; the sequence is TNIAVYWGQN…EILKNLLTSA (285 aa). Catalysis depends on E157, which acts as the Proton donor. Disordered stretches follow at residues 329 to 358 and 461 to 484; these read TSSA…SKVT and TLSP…SDST. The segment at 481–562 is chitin-binding, high affinity; that stretch reads SDSTARTLAK…NFSYLESNYF (82 aa). An N-linked (GlcNAc...) asparagine glycan is attached at N553.

It belongs to the glycosyl hydrolase 18 family. Chitinase class V subfamily. In terms of processing, extensively glycosylated with a series of short O-linked mannose oligosaccharides ranging in size from Man(2) to Man(5).

The protein localises to the secreted. It is found in the cell wall. It catalyses the reaction Random endo-hydrolysis of N-acetyl-beta-D-glucosaminide (1-&gt;4)-beta-linkages in chitin and chitodextrins.. Functionally, chitinase is required for cell separation during growth of S.cerevisiae. In Saccharomyces cerevisiae (strain ATCC 204508 / S288c) (Baker's yeast), this protein is Endochitinase (CTS1).